We begin with the raw amino-acid sequence, 281 residues long: 2,3,4,5-tetrahydropyridine-2,6-dicarboxylate N-succinyltransferase (281 aa).

The substrate site is built by arginine 108 and aspartate 145.

It belongs to the transferase hexapeptide repeat family. As to quaternary structure, homotrimer.

It localises to the cytoplasm. The enzyme catalyses (S)-2,3,4,5-tetrahydrodipicolinate + succinyl-CoA + H2O = (S)-2-succinylamino-6-oxoheptanedioate + CoA. The protein operates within amino-acid biosynthesis; L-lysine biosynthesis via DAP pathway; LL-2,6-diaminopimelate from (S)-tetrahydrodipicolinate (succinylase route): step 1/3. The protein is 2,3,4,5-tetrahydropyridine-2,6-dicarboxylate N-succinyltransferase of Bradyrhizobium diazoefficiens (strain JCM 10833 / BCRC 13528 / IAM 13628 / NBRC 14792 / USDA 110).